A 179-amino-acid polypeptide reads, in one-letter code: Large ribosomal subunit protein uL5 (179 aa).

This sequence belongs to the universal ribosomal protein uL5 family. As to quaternary structure, part of the 50S ribosomal subunit; part of the 5S rRNA/L5/L18/L25 subcomplex. Contacts the 5S rRNA and the P site tRNA. Forms a bridge to the 30S subunit in the 70S ribosome.

In terms of biological role, this is one of the proteins that bind and probably mediate the attachment of the 5S RNA into the large ribosomal subunit, where it forms part of the central protuberance. In the 70S ribosome it contacts protein S13 of the 30S subunit (bridge B1b), connecting the 2 subunits; this bridge is implicated in subunit movement. Contacts the P site tRNA; the 5S rRNA and some of its associated proteins might help stabilize positioning of ribosome-bound tRNAs. The protein is Large ribosomal subunit protein uL5 of Alkaliphilus metalliredigens (strain QYMF).